A 443-amino-acid polypeptide reads, in one-letter code: MGKEKTHINLVVIGHVDSGKSTTTGHIIYKLGGIDRRTIEKFEKESAEMGKGSFKYAWVLDKLKAERERGITIDIALWKFETPRYFFTVIDAPGHKDFIKNMITGTSQADVALLVVPADVGGFDGAFSKEGQTKEHVLLAFTLGVKQIVVGVNKMDTVKYSEDRYEEIKKEVKDYLKKVGYQADKVDFIPISGFEGDNLIEKSDKTPWYKGRTLIEALDTMQPPKRPYDKPLRIPLQGVYKIGGIGTVPVGRVETGILKAGMVLNFAPSAVVSECKSVEMHKEVLEEARPGDNIGFNVKNVSVKEIKRGYVASDTKNEPAKGCSKFTAQVIILNHPGEIKNGYTPLLDCHTSHISCKFLNIDSKIDKRSGKVVEENPKAIKSGDSALVSLEPKKPMVVETFTEYPPLGRFAIRDMRQTIAVGIINQLKRKNLGAVTAKAPAKK.

In terms of domain architecture, tr-type G spans 5–228 (KTHINLVVIG…DTMQPPKRPY (224 aa)). The segment at 14 to 21 (GHVDSGKS) is G1. 14–21 (GHVDSGKS) contributes to the GTP binding site. Residues 70-74 (GITID) are G2. The G3 stretch occupies residues 91–94 (DAPG). GTP is bound by residues 91–95 (DAPGH) and 153–156 (NKMD). The tract at residues 153–156 (NKMD) is G4. The tract at residues 192 to 194 (SGF) is G5.

This sequence belongs to the TRAFAC class translation factor GTPase superfamily. Classic translation factor GTPase family. EF-Tu/EF-1A subfamily.

The protein localises to the cytoplasm. Its function is as follows. This protein promotes the GTP-dependent binding of aminoacyl-tRNA to the A-site of ribosomes during protein biosynthesis. In Plasmodium falciparum (isolate K1 / Thailand), this protein is Elongation factor 1-alpha (MEF-1).